Consider the following 24-residue polypeptide: Brevinin-1Pd (24 aa).

Residues Cys18 and Cys24 are joined by a disulfide bond.

In terms of tissue distribution, expressed by the skin glands.

The protein localises to the secreted. Functionally, antibacterial activity against Gram-positive bacterium S.aureus and Gram-negative bacterium E.coli. Has activity against C.albicans. This Lithobates pipiens (Northern leopard frog) protein is Brevinin-1Pd.